The following is a 408-amino-acid chain: Tyrosine--tRNA ligase (408 aa).

The 'HIGH' region signature appears at 46 to 55 (PTAPDLHVGH). A 'KMSKS' region motif is present at residues 230-234 (KMSKS). Lys233 serves as a coordination point for ATP. An S4 RNA-binding domain is found at 343 to 404 (VWICRLLTDA…GKRRFARIKF (62 aa)).

Belongs to the class-I aminoacyl-tRNA synthetase family. TyrS type 2 subfamily. Homodimer.

It is found in the cytoplasm. The enzyme catalyses tRNA(Tyr) + L-tyrosine + ATP = L-tyrosyl-tRNA(Tyr) + AMP + diphosphate + H(+). In terms of biological role, catalyzes the attachment of tyrosine to tRNA(Tyr) in a two-step reaction: tyrosine is first activated by ATP to form Tyr-AMP and then transferred to the acceptor end of tRNA(Tyr). This is Tyrosine--tRNA ligase from Syntrophotalea carbinolica (strain DSM 2380 / NBRC 103641 / GraBd1) (Pelobacter carbinolicus).